A 199-amino-acid polypeptide reads, in one-letter code: Probable chemoreceptor glutamine deamidase CheD (199 aa).

This sequence belongs to the CheD family.

The enzyme catalyses L-glutaminyl-[protein] + H2O = L-glutamyl-[protein] + NH4(+). Functionally, probably deamidates glutamine residues to glutamate on methyl-accepting chemotaxis receptors (MCPs), playing an important role in chemotaxis. This chain is Probable chemoreceptor glutamine deamidase CheD, found in Cereibacter sphaeroides (Rhodobacter sphaeroides).